Consider the following 113-residue polypeptide: Small ribosomal subunit protein uS17 (113 aa).

Belongs to the universal ribosomal protein uS17 family. As to quaternary structure, part of the 30S ribosomal subunit.

One of the primary rRNA binding proteins, it binds specifically to the 5'-end of 16S ribosomal RNA. The sequence is that of Small ribosomal subunit protein uS17 from Sulfurisphaera tokodaii (strain DSM 16993 / JCM 10545 / NBRC 100140 / 7) (Sulfolobus tokodaii).